The primary structure comprises 315 residues: Olfactory receptor 3A1 (315 aa).

The Extracellular segment spans residues 1 to 28 (MQPESGANGTVIAEFILLGLLEAPGLQP). Residue asparagine 8 is glycosylated (N-linked (GlcNAc...) asparagine). Residues 29–52 (VVFVLFLFAYLVTVGGNLSILAAV) traverse the membrane as a helical segment. Over 53–60 (LVEPKLHS) the chain is Cytoplasmic. Residues 61-82 (PMYFFLGNLSVLDVGCISVTVP) form a helical membrane-spanning segment. Over 83–103 (SMLSRLLSRKRAVPCGACLTQ) the chain is Extracellular. A disulfide bridge links cysteine 100 with cysteine 192. Residues 104–123 (LFFFHLFVGVDCFLLTAMAY) traverse the membrane as a helical segment. At 124 to 143 (DRFLAICRPLTYSTRMSQTV) the chain is on the cytoplasmic side. A helical membrane pass occupies residues 144–161 (QRMLVAASWACAFTNALT). Topologically, residues 162–199 (HTVAMSTLNFCGPNEVNHFYCDLPQLFQLSCSSTQLNE) are extracellular. A helical transmembrane segment spans residues 200-223 (LLLFAVGFIMAGTPMALIVISYIH). Topologically, residues 224 to 240 (VAAAVLRIRSVEGRKKA) are cytoplasmic. A helical membrane pass occupies residues 241 to 264 (FSTCGSHLTVVAMFYGSGIFNYMR). Residues 265–275 (LGSTKLSDKDK) are Extracellular-facing. A helical transmembrane segment spans residues 276–295 (AVGIFNTVINPMVNPIIYRF). The Cytoplasmic segment spans residues 296 to 315 (RNPEVQSAIWRMLTGRRSLA).

The protein belongs to the G-protein coupled receptor 1 family.

It is found in the cell membrane. In terms of biological role, odorant receptor. This Pan troglodytes (Chimpanzee) protein is Olfactory receptor 3A1 (OR3A1).